A 166-amino-acid polypeptide reads, in one-letter code: 16S rRNA aminocarboxypropyltransferase (166 aa).

S-adenosyl-L-methionine-binding residues include Thr17, Ile62, Leu84, Tyr99, and Ser103.

This sequence belongs to the TDD superfamily. TSR3 family.

It is found in the cytoplasm. The catalysed reaction is an N(1)-methylpseudouridine in rRNA + S-adenosyl-L-methionine = N(1)-methyl-N(3)-[(3S)-3-amino-3-carboxypropyl]pseudouridine in rRNA + S-methyl-5'-thioadenosine + H(+). Its function is as follows. Aminocarboxypropyltransferase that catalyzes the aminocarboxypropyl transfer on pseudouridine corresponding to position 914 in M.jannaschii 16S rRNA. It constitutes the last step in biosynthesis of the hypermodified N1-methyl-N3-(3-amino-3-carboxypropyl) pseudouridine (m1acp3-Psi). This Saccharolobus islandicus (strain Y.N.15.51 / Yellowstone #2) (Sulfolobus islandicus) protein is 16S rRNA aminocarboxypropyltransferase.